The primary structure comprises 132 residues: Evasin P985 (132 aa).

The first 24 residues, 1-24 (MHSTIAYVSLLPLALFVAMHGAST), serve as a signal peptide directing secretion. N-linked (GlcNAc...) asparagine glycans are attached at residues Asn45, Asn69, Asn74, Asn103, Asn111, and Asn117. Intrachain disulfides connect Cys48–Cys70, Cys66–Cys109, Cys83–Cys114, and Cys104–Cys123.

It is found in the secreted. Its function is as follows. Salivary chemokine-binding protein which binds to host chemokine CCL5. In Amblyomma parvum (South American tick), this protein is Evasin P985.